Here is an 88-residue protein sequence, read N- to C-terminus: Co-chaperonin GroES (88 aa).

It belongs to the GroES chaperonin family. In terms of assembly, heptamer of 7 subunits arranged in a ring. Interacts with the chaperonin GroEL.

It localises to the cytoplasm. In terms of biological role, together with the chaperonin GroEL, plays an essential role in assisting protein folding. The GroEL-GroES system forms a nano-cage that allows encapsulation of the non-native substrate proteins and provides a physical environment optimized to promote and accelerate protein folding. GroES binds to the apical surface of the GroEL ring, thereby capping the opening of the GroEL channel. The sequence is that of Co-chaperonin GroES from Rubrobacter xylanophilus (strain DSM 9941 / JCM 11954 / NBRC 16129 / PRD-1).